A 101-amino-acid polypeptide reads, in one-letter code: Large ribosomal subunit protein bL21 (101 aa).

The protein belongs to the bacterial ribosomal protein bL21 family. In terms of assembly, part of the 50S ribosomal subunit. Contacts protein L20.

Its function is as follows. This protein binds to 23S rRNA in the presence of protein L20. The sequence is that of Large ribosomal subunit protein bL21 from Micrococcus luteus (strain ATCC 4698 / DSM 20030 / JCM 1464 / CCM 169 / CCUG 5858 / IAM 1056 / NBRC 3333 / NCIMB 9278 / NCTC 2665 / VKM Ac-2230) (Micrococcus lysodeikticus).